The primary structure comprises 443 residues: ATP-dependent protease ATPase subunit HslU (443 aa).

Residues isoleucine 20, 62-67, aspartate 255, glutamate 321, and arginine 393 contribute to the ATP site; that span reads GVGKTE.

It belongs to the ClpX chaperone family. HslU subfamily. A double ring-shaped homohexamer of HslV is capped on each side by a ring-shaped HslU homohexamer. The assembly of the HslU/HslV complex is dependent on binding of ATP.

Its subcellular location is the cytoplasm. ATPase subunit of a proteasome-like degradation complex; this subunit has chaperone activity. The binding of ATP and its subsequent hydrolysis by HslU are essential for unfolding of protein substrates subsequently hydrolyzed by HslV. HslU recognizes the N-terminal part of its protein substrates and unfolds these before they are guided to HslV for hydrolysis. The sequence is that of ATP-dependent protease ATPase subunit HslU from Helicobacter pylori (strain G27).